The chain runs to 188 residues: GTP cyclohydrolase 1 (188 aa).

The Zn(2+) site is built by Cys-78, His-81, and Cys-150.

The protein belongs to the GTP cyclohydrolase I family. As to quaternary structure, homomer.

The enzyme catalyses GTP + H2O = 7,8-dihydroneopterin 3'-triphosphate + formate + H(+). The protein operates within cofactor biosynthesis; 7,8-dihydroneopterin triphosphate biosynthesis; 7,8-dihydroneopterin triphosphate from GTP: step 1/1. The chain is GTP cyclohydrolase 1 from Geobacillus sp. (strain WCH70).